A 176-amino-acid polypeptide reads, in one-letter code: Peptide deformylase 1 (176 aa).

Fe cation contacts are provided by Cys-99 and His-141. The active site involves Glu-142. Residue His-145 coordinates Fe cation.

It belongs to the polypeptide deformylase family. It depends on Fe(2+) as a cofactor.

The catalysed reaction is N-terminal N-formyl-L-methionyl-[peptide] + H2O = N-terminal L-methionyl-[peptide] + formate. Its function is as follows. Removes the formyl group from the N-terminal Met of newly synthesized proteins. Requires at least a dipeptide for an efficient rate of reaction. N-terminal L-methionine is a prerequisite for activity but the enzyme has broad specificity at other positions. This Bordetella pertussis (strain Tohama I / ATCC BAA-589 / NCTC 13251) protein is Peptide deformylase 1.